The primary structure comprises 163 residues: Protein-export protein SecB (163 aa).

It belongs to the SecB family. In terms of assembly, homotetramer, a dimer of dimers. One homotetramer interacts with 1 SecA dimer.

The protein localises to the cytoplasm. Its function is as follows. One of the proteins required for the normal export of preproteins out of the cell cytoplasm. It is a molecular chaperone that binds to a subset of precursor proteins, maintaining them in a translocation-competent state. It also specifically binds to its receptor SecA. The protein is Protein-export protein SecB of Burkholderia cenocepacia (strain ATCC BAA-245 / DSM 16553 / LMG 16656 / NCTC 13227 / J2315 / CF5610) (Burkholderia cepacia (strain J2315)).